The chain runs to 734 residues: Monosaccharide-sensing protein 1 (734 aa).

Helical transmembrane passes span 6–26, 44–64, 79–99, 102–122, 133–153, and 163–183; these read LVAL…ATIA, GLVV…SGPI, VMYF…VLCF, LLNG…ISET, TLPQ…VFTM, and AMLG…VFYL. Residues 351-403 form a disordered region; that stretch reads YNKDNDDYATDDGAGDDDDSDNDLRSPLMSRQTTSMDKDMIPHPTSGSTLSMR. Positions 357–371 are enriched in acidic residues; it reads DYATDDGAGDDDDSD. Serine 446 and serine 480 each carry phosphoserine. 6 helical membrane-spanning segments follow: residues 510–530, 556–576, 588–608, 621–641, 653–673, and 680–700; these read ALVV…NGVL, ASFL…VVAM, LLWT…SELI, GCVV…PNIL, LCIA…TYSL, and IGLV…WIFV.

It belongs to the major facilitator superfamily. Sugar transporter (TC 2.A.1.1) family. As to quaternary structure, binds to VIK at the tonoplast. In terms of processing, phosphorylated by VIK; this activation promotes carrier activity. In terms of tissue distribution, mostly expressed in juvenile and adult leaves, to a lower extent, in flower tissues, and, at low levels, in roots and stems.

The protein localises to the vacuole membrane. The enzyme catalyses D-glucose(out) + H(+)(in) = D-glucose(in) + H(+)(out). The catalysed reaction is sucrose(out) + H(+)(in) = sucrose(in) + H(+)(out). Enhanced activation by VIK-mediated phosphorylation promoting carrier activity and consequently vacuolar sugar accumulation. Functionally, sugar proton-coupled antiporter which contributes to vacuolar sugar import (e.g. monosaccharides including glucose, sucrose and fructose), particularly during stress responses (e.g. in response to cold). Required for cytosolic glucose homeostasis. In Arabidopsis thaliana (Mouse-ear cress), this protein is Monosaccharide-sensing protein 1.